The sequence spans 176 residues: Large ribosomal subunit protein uL10 (176 aa).

The protein belongs to the universal ribosomal protein uL10 family. Part of the ribosomal stalk of the 50S ribosomal subunit. The N-terminus interacts with L11 and the large rRNA to form the base of the stalk. The C-terminus forms an elongated spine to which L12 dimers bind in a sequential fashion forming a multimeric L10(L12)X complex.

Forms part of the ribosomal stalk, playing a central role in the interaction of the ribosome with GTP-bound translation factors. In Dehalococcoides mccartyi (strain ATCC BAA-2100 / JCM 16839 / KCTC 5957 / BAV1), this protein is Large ribosomal subunit protein uL10.